The sequence spans 707 residues: Matrix metalloproteinase-9 (707 aa).

The first 19 residues, 1–19 (MSLWQPLVLVLLVLGCCFA), serve as a signal peptide directing secretion. Positions 20–93 (APRQRQSTLV…GELDSATLKA (74 aa)) are cleaved as a propeptide — activation peptide. N38 carries an N-linked (GlcNAc...) asparagine glycan. Positions 97–104 (PRCGVPDL) match the Cysteine switch motif. C99 is a Zn(2+) binding site. Residues N120 and N127 are each glycosylated (N-linked (GlcNAc...) asparagine). Residues D131 and D165 each coordinate Ca(2+). Residues H175 and D177 each coordinate Zn(2+). Positions 182, 183, 185, and 187 each coordinate Ca(2+). H190 lines the Zn(2+) pocket. 3 residues coordinate Ca(2+): G197, Q199, and D201. A Zn(2+)-binding site is contributed by H203. Ca(2+) is bound by residues D205, D206, and E208. 3 Fibronectin type-II domains span residues 225 to 273 (ADGA…FCPS), 283 to 331 (ADGK…FCPT), and 342 to 390 (SAGE…FCPD). Disulfide bonds link C230/C256, C244/C271, C288/C314, C302/C329, C347/C373, and C361/C388. H401 is a binding site for Zn(2+). The active site involves E402. Zn(2+)-binding residues include H405 and H411. The interval 431–508 (LHKDDVNGIR…AGPSTATTVP (78 aa)) is disordered. 2 stretches are compositionally biased toward pro residues: residues 452–475 (RPPTTTTPQPTAPPTVCPTGPPTV) and 486–499 (TGPPSAGPTGPPTA). C516 and C704 are disulfide-bonded. Hemopexin repeat units lie at residues 518-563 (VNIF…WPAL), 564-608 (PRKL…GLGA), 610-657 (VAQV…FPGV), and 658-704 (PLDT…ILQC).

It belongs to the peptidase M10A family. As to quaternary structure, exists as monomer or homodimer; disulfide-linked. Also exists as heterodimer with LCN2. Macrophages and transformed cell lines produce only the monomeric form. Interacts with ECM1. In terms of assembly, (Microbial infection) Interacts with Staphylococcus aureus protein SSL5; this interaction inhibits MMP9 activity. Requires Zn(2+) as cofactor. It depends on Ca(2+) as a cofactor. Post-translationally, processing of the precursor yields different active forms of 64, 67 and 82 kDa. Sequentially processing by MMP3 yields the 82 kDa matrix metalloproteinase-9. N- and O-glycosylated. In terms of tissue distribution, detected in neutrophils (at protein level). Produced by normal alveolar macrophages and granulocytes.

The protein localises to the secreted. Its subcellular location is the extracellular space. The protein resides in the extracellular matrix. It carries out the reaction Cleavage of gelatin types I and V and collagen types IV and V.. Inhibited by histatin-3 1/24 (histatin-5). Inhibited by ECM1. Matrix metalloproteinase that plays an essential role in local proteolysis of the extracellular matrix and in leukocyte migration. Could play a role in bone osteoclastic resorption. Cleaves KiSS1 at a Gly-|-Leu bond. Cleaves NINJ1 to generate the Secreted ninjurin-1 form. Cleaves type IV and type V collagen into large C-terminal three quarter fragments and shorter N-terminal one quarter fragments. Degrades fibronectin but not laminin or Pz-peptide. This chain is Matrix metalloproteinase-9 (MMP9), found in Homo sapiens (Human).